A 256-amino-acid chain; its full sequence is uncharacterized protein (256 aa).

A run of 2 helical transmembrane segments spans residues isoleucine 155–leucine 175 and isoleucine 203–isoleucine 223.

It is found in the cell membrane. This is an uncharacterized protein from Mycobacterium bovis (strain ATCC BAA-935 / AF2122/97).